Reading from the N-terminus, the 455-residue chain is Chromosomal replication initiator protein DnaA (455 aa).

The tract at residues 1–75 (MDTNNNIEKE…EILSQNKVGM (75 aa)) is domain I, interacts with DnaA modulators. The interval 75–106 (MHLAHSVDVRIEVAPKIQINAQANINYKAIKT) is domain II. Residues 107 to 321 (SVKDSYTFEN…GAIIKISVNA (215 aa)) are domain III, AAA+ region. Gly151, Gly153, Lys154, and Thr155 together coordinate ATP. The tract at residues 322 to 455 (NLMNAPIDLN…DKKTAFNSSE (134 aa)) is domain IV, binds dsDNA.

This sequence belongs to the DnaA family. Oligomerizes as a right-handed, spiral filament on DNA at oriC.

It is found in the cytoplasm. Plays an essential role in the initiation and regulation of chromosomal replication. ATP-DnaA binds to the origin of replication (oriC) to initiate formation of the DNA replication initiation complex once per cell cycle. Binds the DnaA box (a 9 base pair repeat at the origin) and separates the double-stranded (ds)DNA. Forms a right-handed helical filament on oriC DNA; dsDNA binds to the exterior of the filament while single-stranded (ss)DNA is stabiized in the filament's interior. The ATP-DnaA-oriC complex binds and stabilizes one strand of the AT-rich DNA unwinding element (DUE), permitting loading of DNA polymerase. After initiation quickly degrades to an ADP-DnaA complex that is not apt for DNA replication. Binds acidic phospholipids. This chain is Chromosomal replication initiator protein DnaA, found in Helicobacter pylori (strain G27).